The chain runs to 217 residues: N-(5'-phosphoribosyl)anthranilate isomerase (217 aa).

The protein belongs to the TrpF family.

The enzyme catalyses N-(5-phospho-beta-D-ribosyl)anthranilate = 1-(2-carboxyphenylamino)-1-deoxy-D-ribulose 5-phosphate. Its pathway is amino-acid biosynthesis; L-tryptophan biosynthesis; L-tryptophan from chorismate: step 3/5. In Chlorobium phaeovibrioides (strain DSM 265 / 1930) (Prosthecochloris vibrioformis (strain DSM 265)), this protein is N-(5'-phosphoribosyl)anthranilate isomerase.